We begin with the raw amino-acid sequence, 274 residues long: Acyl-coenzyme A diphosphatase YFT2 (274 aa).

The Cytoplasmic portion of the chain corresponds to 1–11 (MIRQLNYWSRK). Residues 12–32 (AYLIYPFQVFVGALLSIVVSS) traverse the membrane as a helical segment. The Lumenal segment spans residues 33-60 (ETLNHQKETCALLKSSNIFNVIFAYKAN). Residues 61-81 (QLWPFLFFSLAFLQIYFHYLA) form a helical membrane-spanning segment. Over 82-124 (RMDILPLPISSTETSSSYLTYTNHWPLLKNRIISIMITQYACK) the chain is Cytoplasmic. Residues 125–145 (FVLKYLLLFLNFQFIDHVFIW) traverse the membrane as a helical segment. The Lumenal segment spans residues 146–170 (TGGECSSGSKTTSAEKCRLENGKWD). Residues 171 to 191 (GGFDISGHFCFLVSISMILWM) traverse the membrane as a helical segment. Residue histidine 178 is part of the active site. Residues 192–215 (ELHLFSRFVQAEDMFWVVNKWVRA) are Cytoplasmic-facing. The helical transmembrane segment at 216–236 (CLAIVCAVLVIWICILWVTAI) threads the bilayer. Residues 237-247 (YYHTILEKVLG) are Lumenal-facing. The active site involves histidine 239. Residues 248 to 268 (CLMGFICPVFIYHILPKIGIL) traverse the membrane as a helical segment. Over 269 to 274 (HNYLYL) the chain is Cytoplasmic.

This sequence belongs to the FIT family. Yeast FIT2A/YFT2 subfamily.

It is found in the endoplasmic reticulum membrane. The protein resides in the vacuole. The enzyme catalyses an acyl-CoA + H2O = an acyl-4'-phosphopantetheine + adenosine 3',5'-bisphosphate + 2 H(+). It catalyses the reaction (9Z)-octadecenoyl-CoA + H2O = S-(9Z-octadecenoyl)-4'-phosphopantetheine + adenosine 3',5'-bisphosphate + 2 H(+). It carries out the reaction (5Z,8Z,11Z,14Z)-eicosatetraenoyl-CoA + H2O = S-(5Z,8Z,11Z,14Z-eicosatetraenoyl)-4'-phosphopantetheine + adenosine 3',5'-bisphosphate + 2 H(+). The catalysed reaction is hexadecanoyl-CoA + H2O = S-hexadecanoyl-4'-phosphopantetheine + adenosine 3',5'-bisphosphate + 2 H(+). In terms of biological role, fatty acyl-coenzyme A (CoA) diphosphatase that hydrolyzes fatty acyl-CoA to yield acyl-4'-phosphopantetheine and adenosine 3',5'-bisphosphate. Preferentially hydrolyzes unsaturated long-chain acyl-CoA substrates in the endoplasmic reticulum (ER) lumen. This catalytic activity is required for maintaining ER structure and for lipid droplets (LDs) biogenesis, which are lipid storage organelles involved in maintaining lipid and energy homeostasis. May directly bind to diacylglycerol (DAGs) and triacylglycerol, which is also important for LD biogenesis. May support directional budding of nacent LDs from the ER into the cytosol by reducing DAG levels at sites of LD formation. May play a role in the regulation of cell morphology and cytoskeletal organization. Involved in phospholipid biosynthesis. The sequence is that of Acyl-coenzyme A diphosphatase YFT2 from Saccharomyces cerevisiae (strain ATCC 204508 / S288c) (Baker's yeast).